The primary structure comprises 145 residues: Large ribosomal subunit protein uL13 (145 aa).

It belongs to the universal ribosomal protein uL13 family. As to quaternary structure, part of the 50S ribosomal subunit.

In terms of biological role, this protein is one of the early assembly proteins of the 50S ribosomal subunit, although it is not seen to bind rRNA by itself. It is important during the early stages of 50S assembly. The polypeptide is Large ribosomal subunit protein uL13 (Staphylococcus epidermidis (strain ATCC 35984 / DSM 28319 / BCRC 17069 / CCUG 31568 / BM 3577 / RP62A)).